Reading from the N-terminus, the 354-residue chain is Uroporphyrinogen decarboxylase (354 aa).

Substrate is bound by residues 27–31, Asp77, Tyr154, Ser209, and His327; that span reads RQAGR.

The protein belongs to the uroporphyrinogen decarboxylase family. As to quaternary structure, homodimer.

It localises to the cytoplasm. It carries out the reaction uroporphyrinogen III + 4 H(+) = coproporphyrinogen III + 4 CO2. It participates in porphyrin-containing compound metabolism; protoporphyrin-IX biosynthesis; coproporphyrinogen-III from 5-aminolevulinate: step 4/4. Functionally, catalyzes the decarboxylation of four acetate groups of uroporphyrinogen-III to yield coproporphyrinogen-III. The polypeptide is Uroporphyrinogen decarboxylase (Shewanella pealeana (strain ATCC 700345 / ANG-SQ1)).